The sequence spans 1225 residues: Hyphally regulated cell wall protein 4 (1225 aa).

An N-terminal signal peptide occupies residues 1–20 (MFSYSQAIRFIIFLLPICLT). N-linked (GlcNAc...) asparagine glycosylation is found at N97, N200, N488, N595, N634, and N694. Residues 832-852 (DLDLPDDTTFTPSQSSSTTVP) are disordered. Residues 838 to 852 (DTTFTPSQSSSTTVP) show a composition bias toward low complexity. N-linked (GlcNAc...) asparagine glycans are attached at residues N933 and N1035. A disordered region spans residues 1049 to 1114 (AYTQQDASTQ…NSHFEGTFIS (66 aa)). N1133, N1150, N1182, and N1193 each carry an N-linked (GlcNAc...) asparagine glycan. S1195 carries GPI-anchor amidated serine lipidation. A propeptide spans 1196–1225 (GLISKSESVVLLIRPVMIFVFLAICVVIML) (removed in mature form).

It belongs to the HYR1/IFF family. Post-translationally, the GPI-anchor is attached to the protein in the endoplasmic reticulum and serves to target the protein to the cell surface. There, the glucosamine-inositol phospholipid moiety is cleaved off and the GPI-modified mannoprotein is covalently attached via its lipidless GPI glycan remnant to the 1,6-beta-glucan of the outer cell wall layer.

It localises to the secreted. The protein resides in the cell wall. The protein localises to the membrane. In terms of biological role, GPI-anchored cell wall protein involved in cell wall organization, hyphal growth, as well as in host-fungal interaction and virulence. The polypeptide is Hyphally regulated cell wall protein 4 (HYR4) (Candida albicans (strain SC5314 / ATCC MYA-2876) (Yeast)).